A 552-amino-acid polypeptide reads, in one-letter code: Probable inorganic phosphate transporter 1-10 (552 aa).

Over 1 to 22 (MAPIGVLTALDQARTQYYHFKA) the chain is Cytoplasmic. The helical transmembrane segment at 23 to 43 (IVIAGMGLFTDSYDLFCIAPV) threads the bilayer. Residues 44-68 (MKIVGRVYYSDGGARPGVTPPAVVS) lie on the Extracellular side of the membrane. A helical transmembrane segment spans residues 69 to 89 (ATVGVALLGAVIGNVVFGALG). The Cytoplasmic portion of the chain corresponds to 90 to 96 (DRVGRRR). The chain crosses the membrane as a helical span at residues 97–117 (VYGACLLLMVCSSVGSGFSVC). Over 118-123 (RTRRCA) the chain is Extracellular. Residues 124 to 144 (LASLCFFRFLLGVGVGGDYPL) traverse the membrane as a helical segment. Residues 145 to 158 (SATIMSEFANRRTR) are Cytoplasmic-facing. The chain crosses the membrane as a helical span at residues 159 to 179 (GAFIAAVFSMQGFGILASSAV). The Extracellular segment spans residues 180–203 (TMAVAAAFDHYTGYPAPLDTPECA). A helical transmembrane segment spans residues 204-224 (DLAWRIILMAGAVPAALTYYW). Over 225–295 (RMSMPETARY…RRFVRQHGRD (71 aa)) the chain is Cytoplasmic. Residues 296-316 (LFACAAAWFLLDIPYYSSTLF) form a helical membrane-spanning segment. Residues 317 to 342 (QSQIYRPLFPAPGLINAFQEAFNVAK) lie on the Extracellular side of the membrane. Residues 343 to 363 (FQAVIAVASTIPGYFVAVLLI) traverse the membrane as a helical segment. Residues 364–369 (DRVGRR) lie on the Cytoplasmic side of the membrane. Residues 370-390 (CLQMAGFLLMAVFLFALAGPY) form a helical membrane-spanning segment. Over 391-397 (DGYWRDH) the chain is Extracellular. The helical transmembrane segment at 398-418 (GAHAGYIVLYSLTFFSANLGP) threads the bilayer. Topologically, residues 419-439 (NTTTFILPAELFPARFRSTCH) are cytoplasmic. Residues 440 to 460 (GLSGAAGKLGALVGSIGFLWA) form a helical membrane-spanning segment. Topologically, residues 461-473 (SQQKDGAAAGHLP) are extracellular. Residues 474 to 494 (GIGMMYALFVLGGICLLGLAL) form a helical membrane-spanning segment. At 495-552 (TYVFTPETMMRSLEENESDRAQTQVGDGGSDTEAAKSPASMASSHLSMSPILPARVSV) the chain is on the cytoplasmic side. A disordered region spans residues 507–540 (LEENESDRAQTQVGDGGSDTEAAKSPASMASSHL).

This sequence belongs to the major facilitator superfamily. Phosphate:H(+) symporter (TC 2.A.1.9) family. Expressed at low levels in roots.

It localises to the membrane. Its function is as follows. High-affinity transporter for external inorganic phosphate. This is Probable inorganic phosphate transporter 1-10 (PHT1-10) from Oryza sativa subsp. japonica (Rice).